We begin with the raw amino-acid sequence, 857 residues long: RNA-directed RNA polymerase 2a (857 aa).

In terms of domain architecture, RdRp catalytic spans 511–624; the sequence is KHCLEIDLSK…FSVLPPVGDP (114 aa). Positions 772-857 are disordered; that stretch reads TKQRKKKDGI…PCEHGGIIRI (86 aa). A compositionally biased stretch (basic and acidic residues) spans 800–812; it reads EKTETKVSHEEST.

This sequence belongs to the ssRNA positive-strand viruses RNA-directed RNA polymerase family. In terms of assembly, interacts with replication protein 1a.

It carries out the reaction RNA(n) + a ribonucleoside 5'-triphosphate = RNA(n+1) + diphosphate. RNA-dependent RNA polymerase which replicates the viral genome composed of 3 RNA segments, RNA1, RNA2 and RNA3. The chain is RNA-directed RNA polymerase 2a from Cucumis sativus (Cucumber).